A 436-amino-acid chain; its full sequence is NAD(P)-dependent benzaldehyde dehydrogenase (436 aa).

NADP(+)-binding positions include 117 to 119 (GPF), 143 to 147 (KPSET), 175 to 178 (RDEN), 193 to 194 (GS), 215 to 216 (EL), Cys-249, and 337 to 339 (ELF). Active-site residues include Glu-215 and Cys-249.

This sequence belongs to the aldehyde dehydrogenase family.

It carries out the reaction benzaldehyde + NAD(+) + H2O = benzoate + NADH + 2 H(+). The catalysed reaction is benzaldehyde + NADP(+) + H2O = benzoate + NADPH + 2 H(+). The protein operates within aromatic compound metabolism; (R)-mandelate degradation; benzoate from (R)-mandelate: step 4/4. Its function is as follows. NAD or NADP-dependent benzaldehyde dehydrogenase that catalyzes the conversion of benzaldehyde into benzoate in the (R)-mandelate degradation pathway. This chain is NAD(P)-dependent benzaldehyde dehydrogenase (mdlD), found in Pseudomonas putida (Arthrobacter siderocapsulatus).